Consider the following 66-residue polypeptide: Photosystem II reaction center protein H (66 aa).

The helical transmembrane segment at 27–47 (GAVPIMTVIGLLLLVFLVILL) threads the bilayer.

This sequence belongs to the PsbH family. In terms of assembly, PSII is composed of 1 copy each of membrane proteins PsbA, PsbB, PsbC, PsbD, PsbE, PsbF, PsbH, PsbI, PsbJ, PsbK, PsbL, PsbM, PsbT, PsbX, PsbY, Psb30/Ycf12, peripheral proteins PsbO, CyanoQ (PsbQ), PsbU, PsbV and a large number of cofactors. It forms dimeric complexes.

Its subcellular location is the cellular thylakoid membrane. Its function is as follows. One of the components of the core complex of photosystem II (PSII), required for its stability and/or assembly. PSII is a light-driven water:plastoquinone oxidoreductase that uses light energy to abstract electrons from H(2)O, generating O(2) and a proton gradient subsequently used for ATP formation. It consists of a core antenna complex that captures photons, and an electron transfer chain that converts photonic excitation into a charge separation. The sequence is that of Photosystem II reaction center protein H from Prochlorococcus marinus (strain MIT 9515).